Here is a 160-residue protein sequence, read N- to C-terminus: CXXC motif containing zinc binding protein (160 aa).

The Zn(2+) site is built by Cys-33, Cys-36, Cys-67, and Cys-70. Residue Ser-75 is modified to Phosphoserine.

Belongs to the UPF0587 family. In terms of assembly, monomer.

The sequence is that of CXXC motif containing zinc binding protein from Homo sapiens (Human).